The following is a 340-amino-acid chain: MRVEEFDYTLPEERIATYPPAERGSTRLIVLDRAADSITHSVYASLHERLRPGDLLVLNNSKVIRARLIANKPTGGRIELMLLEKHEGVQNLALYRGRLKVGDRLLAHGAELTVEALPDHGVARLSCDTANLTELFEAHGSVPIPPYLKRDAEEVDRERYQTVFAELPGSVAAPTASLNLTDELLEKIKAKGVDVVHITLHVGLGTFLPIRSETFEEHVMHREFYNIPESSAHKIGEAKARGGRVVAVGTTVTRALEHAAPRLLDSDFSQEVSGEADIFIYPGYEFRIIDALLTNFHAPRSTVLMLTAAFAGKELLRRAYQEALERDYRFLSYGDSMFIS.

The protein belongs to the QueA family. In terms of assembly, monomer.

It localises to the cytoplasm. The catalysed reaction is 7-aminomethyl-7-carbaguanosine(34) in tRNA + S-adenosyl-L-methionine = epoxyqueuosine(34) in tRNA + adenine + L-methionine + 2 H(+). It functions in the pathway tRNA modification; tRNA-queuosine biosynthesis. Its function is as follows. Transfers and isomerizes the ribose moiety from AdoMet to the 7-aminomethyl group of 7-deazaguanine (preQ1-tRNA) to give epoxyqueuosine (oQ-tRNA). The polypeptide is S-adenosylmethionine:tRNA ribosyltransferase-isomerase (Chlorobaculum parvum (strain DSM 263 / NCIMB 8327) (Chlorobium vibrioforme subsp. thiosulfatophilum)).